The primary structure comprises 417 residues: NADH-quinone oxidoreductase subunit D (417 aa).

Belongs to the complex I 49 kDa subunit family. In terms of assembly, NDH-1 is composed of 14 different subunits. Subunits NuoB, C, D, E, F, and G constitute the peripheral sector of the complex.

It is found in the cell inner membrane. The enzyme catalyses a quinone + NADH + 5 H(+)(in) = a quinol + NAD(+) + 4 H(+)(out). Its function is as follows. NDH-1 shuttles electrons from NADH, via FMN and iron-sulfur (Fe-S) centers, to quinones in the respiratory chain. The immediate electron acceptor for the enzyme in this species is believed to be ubiquinone. Couples the redox reaction to proton translocation (for every two electrons transferred, four hydrogen ions are translocated across the cytoplasmic membrane), and thus conserves the redox energy in a proton gradient. The polypeptide is NADH-quinone oxidoreductase subunit D (Cupriavidus metallidurans (strain ATCC 43123 / DSM 2839 / NBRC 102507 / CH34) (Ralstonia metallidurans)).